A 369-amino-acid polypeptide reads, in one-letter code: Anhydro-N-acetylmuramic acid kinase (369 aa).

Gly12–Asp19 provides a ligand contact to ATP.

It belongs to the anhydro-N-acetylmuramic acid kinase family.

The catalysed reaction is 1,6-anhydro-N-acetyl-beta-muramate + ATP + H2O = N-acetyl-D-muramate 6-phosphate + ADP + H(+). Its pathway is amino-sugar metabolism; 1,6-anhydro-N-acetylmuramate degradation. The protein operates within cell wall biogenesis; peptidoglycan recycling. Functionally, catalyzes the specific phosphorylation of 1,6-anhydro-N-acetylmuramic acid (anhMurNAc) with the simultaneous cleavage of the 1,6-anhydro ring, generating MurNAc-6-P. Is required for the utilization of anhMurNAc either imported from the medium or derived from its own cell wall murein, and thus plays a role in cell wall recycling. This is Anhydro-N-acetylmuramic acid kinase from Shewanella baltica (strain OS223).